The primary structure comprises 288 residues: Syntaxin-1A (288 aa).

Residues 1–13 (MKDRTQELRTAKD) are compositionally biased toward basic and acidic residues. The tract at residues 1–20 (MKDRTQELRTAKDSDDDDDV) is disordered. Residues 1–265 (MKDRTQELRT…KYQSKARRKK (265 aa)) lie on the Cytoplasmic side of the membrane. S14, S64, and S95 each carry phosphoserine. Residues 68-109 (DEKTKEELEELMSDIKKTANKVRSKLKSIEQSIEQEEGLNRS) adopt a coiled-coil conformation. Position 188 is a phosphoserine; by DAPK1 (S188). The 63-residue stretch at 192–254 (LSEIETRHSE…ERAVSDTKKA (63 aa)) folds into the t-SNARE coiled-coil homology domain. Residues K252, K253, and K256 each participate in a glycyl lysine isopeptide (Lys-Gly) (interchain with G-Cter in SUMO) cross-link. Residues 266–288 (IMIIICCVILGIIIASTIGGIFG) traverse the membrane as a helical; Anchor for type IV membrane protein segment.

It belongs to the syntaxin family. As to quaternary structure, part of the SNARE core complex containing SNAP25, VAMP2 and STX1A; this complex constitutes the basic catalytic machinery of the complex neurotransmitter release apparatus. The SNARE complex interacts with CPLX1. Interacts with STXBP1. The interaction with STXBP1 promotes assembly of the SNARE complex. Interacts (via C-terminus) with KCNB1 (via C-terminus); the interaction increases in a calcium-dependent manner and induces a pore-independent enhancement of exocytosis in neuroendocrine cells, chromaffin cells, pancreatic beta cells and from the soma of dorsal root ganglia (DRG) neurons. Interacts with SYTL4. Interacts with STXBP6. Interacts with PLCL1 (via C2 domain). Interacts with OTOF. Interacts with LGI3. Interacts (via the H3 domain) with SLC6A4 (via the N-terminus); this interaction regulates SLC4A6 channel conductance in thalamocortical neurons. Interacts with SYT6 and SYT8; the interaction is Ca(2+)-dependent. Interacts with VAMP8. Interacts with SNAP23. Interacts with VAPA and SYBU. Interacts with PRRT2. Interacts with SEPT8. Interacts with STXBP5L. Interacts with synaptotagmin-1/SYT1. Interacts with SEPTIN5; in the cerebellar cortex. Interacts with SEPTIN4; in the striatum. Post-translationally, phosphorylated by CK2. Phosphorylation at Ser-188 by DAPK1 significantly decreases its interaction with STXBP1. (Microbial infection) Targeted and hydrolyzed by C.botulinum neurotoxin type C (BoNT/C), which hydrolyzes the 253-Lys-|-Ala-254 bond. Cleavage inhibits neurotransmitter release. In terms of processing, phosphorylated by CK2. Phosphorylation at Ser-188 by DAPK1 significantly decreases its interaction with STXBP1. Post-translationally, sumoylated, sumoylation is required for regulation of synaptic vesicle endocytosis. As to expression, expressed predominantly in cerebral cortex, hippocampus, cerebellum, adrenal medulla and retina with weak expression detected in non-neuronal tissues.

The protein resides in the cytoplasmic vesicle. It is found in the secretory vesicle. It localises to the synaptic vesicle membrane. The protein localises to the cell membrane. Its subcellular location is the synapse. The protein resides in the synaptosome. Plays an essential role in hormone and neurotransmitter calcium-dependent exocytosis and endocytosis. Part of the SNARE (Soluble NSF Attachment Receptor) complex composed of SNAP25, STX1A and VAMP2 which mediates the fusion of synaptic vesicles with the presynaptic plasma membrane. STX1A and SNAP25 are localized on the plasma membrane while VAMP2 resides in synaptic vesicles. The pairing of the three SNAREs from the N-terminal SNARE motifs to the C-terminal anchors leads to the formation of the SNARE complex, which brings membranes into close proximity and results in final fusion. Participates in the calcium-dependent regulation of acrosomal exocytosis in sperm. Also plays an important role in the exocytosis of hormones such as insulin or glucagon-like peptide 1 (GLP-1). This is Syntaxin-1A (Stx1a) from Rattus norvegicus (Rat).